We begin with the raw amino-acid sequence, 393 residues long: NAD(P)H-quinone oxidoreductase subunit H, chloroplastic (393 aa).

Belongs to the complex I 49 kDa subunit family. As to quaternary structure, NDH is composed of at least 16 different subunits, 5 of which are encoded in the nucleus.

The protein localises to the plastid. It localises to the chloroplast thylakoid membrane. The enzyme catalyses a plastoquinone + NADH + (n+1) H(+)(in) = a plastoquinol + NAD(+) + n H(+)(out). It catalyses the reaction a plastoquinone + NADPH + (n+1) H(+)(in) = a plastoquinol + NADP(+) + n H(+)(out). In terms of biological role, NDH shuttles electrons from NAD(P)H:plastoquinone, via FMN and iron-sulfur (Fe-S) centers, to quinones in the photosynthetic chain and possibly in a chloroplast respiratory chain. The immediate electron acceptor for the enzyme in this species is believed to be plastoquinone. Couples the redox reaction to proton translocation, and thus conserves the redox energy in a proton gradient. This Carica papaya (Papaya) protein is NAD(P)H-quinone oxidoreductase subunit H, chloroplastic.